Consider the following 178-residue polypeptide: Twist-related protein (178 aa).

One can recognise a bHLH domain in the interval Gln-20–Leu-71.

Efficient DNA binding requires dimerization with another bHLH protein. Homodimer. Forms a heterodimer with hlh-2. In terms of tissue distribution, expressed in defecation-associated muscles and neuron-like cells in the head at the L1 stage. In later larvae, expressed in SM cells and their descendants. Not expressed in differentiated body wall or sex muscles.

It localises to the nucleus. In terms of biological role, acts as a transcriptional regulator. Involved in postembryonic mesodermal cell fate specification. Activates ceh-24 and egl-15 during mesodermal patterning. The sequence is that of Twist-related protein (hlh-8) from Caenorhabditis elegans.